The following is a 311-amino-acid chain: Ribosomal RNA small subunit methyltransferase H (311 aa).

Residues 34–36, aspartate 54, phenylalanine 80, aspartate 104, and glutamine 111 contribute to the S-adenosyl-L-methionine site; that span reads GGH.

It belongs to the methyltransferase superfamily. RsmH family.

The protein resides in the cytoplasm. The catalysed reaction is cytidine(1402) in 16S rRNA + S-adenosyl-L-methionine = N(4)-methylcytidine(1402) in 16S rRNA + S-adenosyl-L-homocysteine + H(+). Functionally, specifically methylates the N4 position of cytidine in position 1402 (C1402) of 16S rRNA. The polypeptide is Ribosomal RNA small subunit methyltransferase H (Teredinibacter turnerae (strain ATCC 39867 / T7901)).